Reading from the N-terminus, the 348-residue chain is Alanine racemase (348 aa).

The Proton acceptor; specific for D-alanine role is filled by Lys-34. Lys-34 bears the N6-(pyridoxal phosphate)lysine mark. Arg-127 lines the substrate pocket. Residue Tyr-243 is the Proton acceptor; specific for L-alanine of the active site. Met-291 is a binding site for substrate.

It belongs to the alanine racemase family. It depends on pyridoxal 5'-phosphate as a cofactor.

It carries out the reaction L-alanine = D-alanine. It participates in amino-acid biosynthesis; D-alanine biosynthesis; D-alanine from L-alanine: step 1/1. Functionally, catalyzes the interconversion of L-alanine and D-alanine. May also act on other amino acids. The protein is Alanine racemase (alr) of Coprothermobacter proteolyticus (strain ATCC 35245 / DSM 5265 / OCM 4 / BT).